A 514-amino-acid chain; its full sequence is Exoglucanase 1 (514 aa).

The N-terminal stretch at 1 to 17 (MYQKLALISAFLATARA) is a signal peptide. Residues 18–453 (QSACTLQAET…GSTGNSSGGN (436 aa)) form a catalytic region. 10 cysteine pairs are disulfide-bonded: C21-C89, C36-C42, C67-C88, C78-C84, C155-C414, C189-C227, C193-C226, C247-C273, C255-C260, and C278-C348. 2 N-linked (GlcNAc...) asparagine glycosylation sites follow: N62 and N81. E229 (nucleophile) is an active-site residue. E234 serves as the catalytic Proton donor. N287 carries an N-linked (GlcNAc...) asparagine glycan. Disordered regions lie at residues 401-427 (NETS…LESN) and 444-481 (GSTG…PTQT). A linker region spans residues 454 to 478 (PPGGNPPGTTTTRRPATSTGSSPGP). Over residues 460-479 (PGTTTTRRPATSTGSSPGPT) the composition is skewed to low complexity. The 37-residue stretch at 478-514 (PTQTHYGQCGGIGYSGPTVCASGSTCQVLNPYYSQCL) folds into the CBM1 domain. 2 disulfide bridges follow: C486–C503 and C497–C513.

Belongs to the glycosyl hydrolase 7 (cellulase C) family.

The enzyme catalyses Hydrolysis of (1-&gt;4)-beta-D-glucosidic linkages in cellulose and cellotetraose, releasing cellobiose from the non-reducing ends of the chains.. In terms of biological role, the biological conversion of cellulose to glucose generally requires three types of hydrolytic enzymes: (1) Endoglucanases which cut internal beta-1,4-glucosidic bonds; (2) Exocellobiohydrolases that cut the disaccharide cellobiose from the non-reducing end of the cellulose polymer chain; (3) Beta-1,4-glucosidases which hydrolyze the cellobiose and other short cello-oligosaccharides to glucose. The polypeptide is Exoglucanase 1 (cbh1) (Hypocrea rufa (Trichoderma viride)).